The sequence spans 457 residues: Aromatic amino acid transport protein AroP (457 aa).

Over 1 to 20 the chain is Cytoplasmic; sequence MMDSQQHGEQLKRGLKNRHI. A helical membrane pass occupies residues 21–41; sequence QLIALGGAIGTGLFLGSASVI. A topological domain (periplasmic) is located at residue glutamine 42. A helical membrane pass occupies residues 43–63; sequence SAGPGIILGYAIAGFIAFLIM. The Cytoplasmic portion of the chain corresponds to 64–86; sequence RQLGEMVVEEPVAGSFSHFAYKY. The chain crosses the membrane as a helical span at residues 87 to 107; the sequence is WGGFAGFASGWNYWVLYVLVA. The Periplasmic portion of the chain corresponds to 108 to 117; that stretch reads MAELTAVGKY. A helical transmembrane segment spans residues 118 to 138; sequence IQFWYPEIPTWASAAAFFVII. Residues 139 to 155 are Cytoplasmic-facing; the sequence is NAINLTNVKVFGEMEFW. A helical transmembrane segment spans residues 156–176; that stretch reads FAIIKVIAVIAMILFGAWLLF. The Periplasmic segment spans residues 177–201; the sequence is SDTAGPQATVRNLWEQGGFLPHGWT. Residues 202–222 form a helical membrane-spanning segment; it reads GLVMMMAIIMFSFGGLELVGI. The Cytoplasmic portion of the chain corresponds to 223 to 240; sequence TAAEADNPEQSIPKATNQ. A helical membrane pass occupies residues 241–261; that stretch reads VIYRILIFYIGSLAVLLSLLP. The Periplasmic portion of the chain corresponds to 262 to 271; the sequence is WTRVTADTSP. Residues 272–292 traverse the membrane as a helical segment; it reads FVLIFHELGDTFVANALNIVV. Over 293 to 333 the chain is Cytoplasmic; sequence LTAALSVYNSCVYCNSRMLFGLAQQGNAPKALLNVDKRGVP. Residues 334 to 354 traverse the membrane as a helical segment; that stretch reads VSSILVSAVVTALCVLLNYLA. At 355–358 the chain is on the periplasmic side; that stretch reads PESA. The chain crosses the membrane as a helical span at residues 359-379; the sequence is FGLLMALVVSALVINWAMISL. At 380-400 the chain is on the cytoplasmic side; it reads AHMMFRRAKQQQGVKTRFPAL. Residues 401–421 form a helical membrane-spanning segment; sequence FYPFGNVLCLLFMAAVLIIML. The Periplasmic portion of the chain corresponds to 422–425; that stretch reads MTPG. Residues 426–446 form a helical membrane-spanning segment; that stretch reads MAISVWLIPVWLLILGVGYLC. Over 447 to 457 the chain is Cytoplasmic; that stretch reads KEKTAKTVKAH.

The protein belongs to the amino acid-polyamine-organocation (APC) superfamily. Amino acid transporter (AAT) (TC 2.A.3.1) family.

The protein localises to the cell inner membrane. The catalysed reaction is L-phenylalanine(in) + H(+)(in) = L-phenylalanine(out) + H(+)(out). The enzyme catalyses L-tryptophan(in) + H(+)(in) = L-tryptophan(out) + H(+)(out). It catalyses the reaction L-tyrosine(in) + H(+)(in) = L-tyrosine(out) + H(+)(out). In terms of biological role, permease that is involved in the active transport across the cytoplasmic membrane of all three aromatic amino acids, phenylalanine, tyrosine and tryptophan. The protein is Aromatic amino acid transport protein AroP (aroP) of Salmonella typhi.